The following is a 555-amino-acid chain: Glutamate--tRNA ligase (555 aa).

Residues 100 to 110 (PNPSGPLHIGH) carry the 'HIGH' region motif.

It belongs to the class-I aminoacyl-tRNA synthetase family. Glutamate--tRNA ligase type 2 subfamily.

Its subcellular location is the cytoplasm. It catalyses the reaction tRNA(Glu) + L-glutamate + ATP = L-glutamyl-tRNA(Glu) + AMP + diphosphate. Catalyzes the attachment of glutamate to tRNA(Glu) in a two-step reaction: glutamate is first activated by ATP to form Glu-AMP and then transferred to the acceptor end of tRNA(Glu). The sequence is that of Glutamate--tRNA ligase from Methanococcus maripaludis (strain DSM 14266 / JCM 13030 / NBRC 101832 / S2 / LL).